Here is a 474-residue protein sequence, read N- to C-terminus: Trehalose-6-phosphate synthase (474 aa).

Arginine 10 contributes to the D-glucose 6-phosphate binding site. 22-23 (GG) lines the UDP-alpha-D-glucose pocket. Tyrosine 77 and aspartate 131 together coordinate D-glucose 6-phosphate. UDP-alpha-D-glucose-binding residues include arginine 263 and lysine 268. Arginine 301 is a D-glucose 6-phosphate binding site. UDP-alpha-D-glucose-binding positions include phenylalanine 340 and 366-370 (LVAKE).

Belongs to the glycosyltransferase 20 family. Homotetramer.

The catalysed reaction is D-glucose 6-phosphate + UDP-alpha-D-glucose = alpha,alpha-trehalose 6-phosphate + UDP + H(+). It participates in glycan biosynthesis; trehalose biosynthesis. Its function is as follows. Probably involved in the osmoprotection via the biosynthesis of trehalose. Catalyzes the transfer of glucose from UDP-alpha-D-glucose (UDP-Glc) to D-glucose 6-phosphate (Glc-6-P) to form trehalose-6-phosphate. Acts with retention of the anomeric configuration of the UDP-sugar donor. The polypeptide is Trehalose-6-phosphate synthase (Escherichia coli O6:K15:H31 (strain 536 / UPEC)).